Here is a 178-residue protein sequence, read N- to C-terminus: Cell division protein SepF (178 aa).

Residues 19–45 (EHYESEHHTPHKDEDDSMEHDREERRA) show a composition bias toward basic and acidic residues. The disordered stretch occupies residues 19–65 (EHYESEHHTPHKDEDDSMEHDREERRAPAPVREIARETPTPHAAEEE).

Belongs to the SepF family. Homodimer. Interacts with FtsZ.

It localises to the cytoplasm. Cell division protein that is part of the divisome complex and is recruited early to the Z-ring. Probably stimulates Z-ring formation, perhaps through the cross-linking of FtsZ protofilaments. Its function overlaps with FtsA. This chain is Cell division protein SepF, found in Arthrobacter sp. (strain FB24).